The following is a 924-amino-acid chain: Protein translocase subunit SecA (924 aa).

Residues glutamine 87, 105-109 (GEGKT), and aspartate 515 each bind ATP. 4 residues coordinate Zn(2+): cysteine 908, cysteine 910, cysteine 919, and histidine 920.

Belongs to the SecA family. Monomer and homodimer. Part of the essential Sec protein translocation apparatus which comprises SecA, SecYEG and auxiliary proteins SecDF-YajC and YidC. The cofactor is Zn(2+).

It is found in the cell inner membrane. The protein localises to the cytoplasm. The enzyme catalyses ATP + H2O + cellular proteinSide 1 = ADP + phosphate + cellular proteinSide 2.. Part of the Sec protein translocase complex. Interacts with the SecYEG preprotein conducting channel. Has a central role in coupling the hydrolysis of ATP to the transfer of proteins into and across the cell membrane, serving both as a receptor for the preprotein-SecB complex and as an ATP-driven molecular motor driving the stepwise translocation of polypeptide chains across the membrane. This Cupriavidus pinatubonensis (strain JMP 134 / LMG 1197) (Cupriavidus necator (strain JMP 134)) protein is Protein translocase subunit SecA.